Here is a 431-residue protein sequence, read N- to C-terminus: 3-phosphoshikimate 1-carboxyvinyltransferase (431 aa).

3-phosphoshikimate contacts are provided by K23, S24, and R28. K23 is a phosphoenolpyruvate binding site. Phosphoenolpyruvate is bound by residues G96 and R124. The 3-phosphoshikimate site is built by S169, Q171, D317, and K344. Q171 is a binding site for phosphoenolpyruvate. The active-site Proton acceptor is D317. R348 and R390 together coordinate phosphoenolpyruvate.

The protein belongs to the EPSP synthase family. Monomer.

The protein resides in the cytoplasm. It carries out the reaction 3-phosphoshikimate + phosphoenolpyruvate = 5-O-(1-carboxyvinyl)-3-phosphoshikimate + phosphate. It participates in metabolic intermediate biosynthesis; chorismate biosynthesis; chorismate from D-erythrose 4-phosphate and phosphoenolpyruvate: step 6/7. Functionally, catalyzes the transfer of the enolpyruvyl moiety of phosphoenolpyruvate (PEP) to the 5-hydroxyl of shikimate-3-phosphate (S3P) to produce enolpyruvyl shikimate-3-phosphate and inorganic phosphate. The sequence is that of 3-phosphoshikimate 1-carboxyvinyltransferase from Syntrophotalea carbinolica (strain DSM 2380 / NBRC 103641 / GraBd1) (Pelobacter carbinolicus).